The sequence spans 258 residues: Proteasome subunit alpha type-3 (258 aa).

Glycyl lysine isopeptide (Lys-Gly) (interchain with G-Cter in ubiquitin) cross-links involve residues lysine 100, lysine 199, and lysine 231.

It belongs to the peptidase T1A family. As to quaternary structure, the 26S proteasome consists of a 20S proteasome core and two 19S regulatory subunits. The 20S proteasome core is composed of 28 subunits that are arranged in four stacked rings, resulting in a barrel-shaped structure. The two end rings are each formed by seven alpha subunits, and the two central rings are each formed by seven beta subunits. The catalytic chamber with the active sites is on the inside of the barrel.

Its subcellular location is the cytoplasm. It localises to the nucleus. Functionally, the proteasome degrades poly-ubiquitinated proteins in the cytoplasm and in the nucleus. It is essential for the regulated turnover of proteins and for the removal of misfolded proteins. The proteasome is a multicatalytic proteinase complex that is characterized by its ability to cleave peptides with Arg, Phe, Tyr, Leu, and Glu adjacent to the leaving group at neutral or slightly basic pH. It has an ATP-dependent proteolytic activity. The protein is Proteasome subunit alpha type-3 (PRE9) of Saccharomyces cerevisiae (strain ATCC 204508 / S288c) (Baker's yeast).